Here is a 218-residue protein sequence, read N- to C-terminus: Ribose-5-phosphate isomerase A (218 aa).

Residues 28-31 (TGST), 81-84 (DGAD), and 94-97 (KGGG) each bind substrate. The Proton acceptor role is filled by Glu103. Position 121 (Lys121) interacts with substrate.

It belongs to the ribose 5-phosphate isomerase family. Homodimer.

It catalyses the reaction aldehydo-D-ribose 5-phosphate = D-ribulose 5-phosphate. It functions in the pathway carbohydrate degradation; pentose phosphate pathway; D-ribose 5-phosphate from D-ribulose 5-phosphate (non-oxidative stage): step 1/1. Functionally, catalyzes the reversible conversion of ribose-5-phosphate to ribulose 5-phosphate. This is Ribose-5-phosphate isomerase A from Sodalis glossinidius (strain morsitans).